We begin with the raw amino-acid sequence, 356 residues long: Probable cinnamyl alcohol dehydrogenase (356 aa).

Residue cysteine 47 coordinates Zn(2+). Residue serine 49 coordinates NADP(+). 7 residues coordinate Zn(2+): histidine 69, glutamate 70, cysteine 100, cysteine 103, cysteine 106, cysteine 114, and cysteine 163. NADP(+) is bound by residues threonine 167, glycine 188–glycine 193, serine 211–lysine 216, threonine 251, glycine 275, and serine 298–isoleucine 300.

This sequence belongs to the zinc-containing alcohol dehydrogenase family. Homodimer. Zn(2+) is required as a cofactor.

It catalyses the reaction (E)-cinnamyl alcohol + NADP(+) = (E)-cinnamaldehyde + NADPH + H(+). The enzyme catalyses (E)-coniferol + NADP(+) = (E)-coniferaldehyde + NADPH + H(+). The catalysed reaction is (E)-sinapyl alcohol + NADP(+) = (E)-sinapaldehyde + NADPH + H(+). It carries out the reaction (E)-4-coumaroyl alcohol + NADP(+) = (E)-4-coumaraldehyde + NADPH + H(+). It catalyses the reaction (E)-caffeyl alcohol + NADP(+) = (E)-caffeyl aldehyde + NADPH + H(+). It functions in the pathway aromatic compound metabolism; phenylpropanoid biosynthesis. In terms of biological role, involved in lignin biosynthesis. Catalyzes the final step specific for the production of lignin monomers. Catalyzes the NADPH-dependent reduction of coniferaldehyde, 5-hydroxyconiferaldehyde, sinapaldehyde, 4-coumaraldehyde and caffeyl aldehyde to their respective alcohols. In Eucalyptus globulus (Tasmanian blue gum), this protein is Probable cinnamyl alcohol dehydrogenase (CAD).